A 557-amino-acid polypeptide reads, in one-letter code: Dihydroxy-acid dehydratase (557 aa).

Asp78 is a binding site for Mg(2+). A [2Fe-2S] cluster-binding site is contributed by Cys119. Mg(2+)-binding residues include Asp120 and Lys121. The residue at position 121 (Lys121) is an N6-carboxylysine. Cys191 serves as a coordination point for [2Fe-2S] cluster. Mg(2+) is bound at residue Glu442. Ser468 serves as the catalytic Proton acceptor.

This sequence belongs to the IlvD/Edd family. In terms of assembly, homodimer. The cofactor is [2Fe-2S] cluster. Requires Mg(2+) as cofactor.

It catalyses the reaction (2R)-2,3-dihydroxy-3-methylbutanoate = 3-methyl-2-oxobutanoate + H2O. It carries out the reaction (2R,3R)-2,3-dihydroxy-3-methylpentanoate = (S)-3-methyl-2-oxopentanoate + H2O. The protein operates within amino-acid biosynthesis; L-isoleucine biosynthesis; L-isoleucine from 2-oxobutanoate: step 3/4. It participates in amino-acid biosynthesis; L-valine biosynthesis; L-valine from pyruvate: step 3/4. Its function is as follows. Functions in the biosynthesis of branched-chain amino acids. Catalyzes the dehydration of (2R,3R)-2,3-dihydroxy-3-methylpentanoate (2,3-dihydroxy-3-methylvalerate) into 2-oxo-3-methylpentanoate (2-oxo-3-methylvalerate) and of (2R)-2,3-dihydroxy-3-methylbutanoate (2,3-dihydroxyisovalerate) into 2-oxo-3-methylbutanoate (2-oxoisovalerate), the penultimate precursor to L-isoleucine and L-valine, respectively. The chain is Dihydroxy-acid dehydratase from Lachnoclostridium phytofermentans (strain ATCC 700394 / DSM 18823 / ISDg) (Clostridium phytofermentans).